The sequence spans 205 residues: MEQYGFYFDSERCTGCKTCELACKDYKDLGTEVNFRRIYEYTGGQWNQQADGCWHQNIFAYYMSISCNHCADPACTKVCPTGAMHKNADGFVIVNEEICIGCRYCHMACPYDAPQYDAQKGHMTKCDGCYSRVKSGQKPICVDACPLRALDFAPIDELRTKYGTQASIAPLPPTDITQPNLVVKPNKYARLSGDTSGFLGNPREV.

3 consecutive 4Fe-4S ferredoxin-type domains span residues 4 to 32 (YGFY…LGTE), 57 to 89 (NIFA…KNAD), and 90 to 119 (GFVI…YDAQ). [4Fe-4S] cluster is bound by residues Cys13, Cys16, Cys19, Cys23, Cys67, Cys70, Cys75, Cys79, Cys99, Cys102, Cys105, Cys109, Cys126, Cys129, Cys141, and Cys145.

In terms of assembly, heterotrimeric enzyme composed of a catalytic heterodimer (DmsAB) and a membrane anchor protein (DmsC). Requires [4Fe-4S] cluster as cofactor.

Electron transfer subunit of the terminal reductase during anaerobic growth on various sulfoxide and N-oxide compounds. The chain is Anaerobic dimethyl sulfoxide reductase chain B (dmsB) from Haemophilus influenzae (strain ATCC 51907 / DSM 11121 / KW20 / Rd).